Here is a 687-residue protein sequence, read N- to C-terminus: Mu-like prophage FluMu transposase A (687 aa).

The region spanning 8-74 (THYSVYELAN…ELLLKTTPEQ (67 aa)) is the HTH Mu-type domain. The segment at residues 398-417 (PIERAFSHGGLGDYVDKHLL) is a DNA-binding region (H-T-H motif).

This transposase is essential for integration, replication-transposition, and excision of Mu-like viral DNA. This is Mu-like prophage FluMu transposase A from Haemophilus influenzae (strain ATCC 51907 / DSM 11121 / KW20 / Rd).